A 105-amino-acid chain; its full sequence is ATP-dependent Clp protease adapter protein ClpS (105 aa).

It belongs to the ClpS family. In terms of assembly, binds to the N-terminal domain of the chaperone ClpA.

Functionally, involved in the modulation of the specificity of the ClpAP-mediated ATP-dependent protein degradation. The polypeptide is ATP-dependent Clp protease adapter protein ClpS (Aeromonas hydrophila subsp. hydrophila (strain ATCC 7966 / DSM 30187 / BCRC 13018 / CCUG 14551 / JCM 1027 / KCTC 2358 / NCIMB 9240 / NCTC 8049)).